The chain runs to 431 residues: tRNA(Ile)-lysidine synthase (431 aa).

An ATP-binding site is contributed by 26-31 (SGGVDS).

The protein belongs to the tRNA(Ile)-lysidine synthase family.

The protein localises to the cytoplasm. The catalysed reaction is cytidine(34) in tRNA(Ile2) + L-lysine + ATP = lysidine(34) in tRNA(Ile2) + AMP + diphosphate + H(+). Its function is as follows. Ligates lysine onto the cytidine present at position 34 of the AUA codon-specific tRNA(Ile) that contains the anticodon CAU, in an ATP-dependent manner. Cytidine is converted to lysidine, thus changing the amino acid specificity of the tRNA from methionine to isoleucine. This chain is tRNA(Ile)-lysidine synthase, found in Wolbachia pipientis wMel.